Here is a 335-residue protein sequence, read N- to C-terminus: DNA primase small subunit PriS (335 aa).

Residues Asp96, Asp98, and Asp243 contribute to the active site.

This sequence belongs to the eukaryotic-type primase small subunit family. Heterodimer of a small subunit (PriS) and a large subunit (PriL). Mg(2+) is required as a cofactor. Requires Mn(2+) as cofactor.

Catalytic subunit of DNA primase, an RNA polymerase that catalyzes the synthesis of short RNA molecules used as primers for DNA polymerase during DNA replication. The small subunit contains the primase catalytic core and has DNA synthesis activity on its own. Binding to the large subunit stabilizes and modulates the activity, increasing the rate of DNA synthesis while decreasing the length of the DNA fragments, and conferring RNA synthesis capability. The DNA polymerase activity may enable DNA primase to also catalyze primer extension after primer synthesis. May also play a role in DNA repair. This is DNA primase small subunit PriS from Archaeoglobus fulgidus (strain ATCC 49558 / DSM 4304 / JCM 9628 / NBRC 100126 / VC-16).